Here is a 97-residue protein sequence, read N- to C-terminus: Large ribosomal subunit protein bL28 (97 aa).

The protein belongs to the bacterial ribosomal protein bL28 family.

The polypeptide is Large ribosomal subunit protein bL28 (Rickettsia peacockii (strain Rustic)).